The primary structure comprises 709 residues: ATP-dependent RNA helicase dbp7 (709 aa).

A disordered region spans residues 13-90; it reads DNAQSRKPEA…KPAHELKGNK (78 aa). A compositionally biased stretch (basic and acidic residues) spans 16–34; that stretch reads QSRKPEALKSSRRWTDRAR. The segment covering 44 to 65 has biased composition (polar residues); the sequence is NESSKSTVKRNSGTNGASTDYK. The span at 66–90 shows a compositional bias: basic and acidic residues; sequence NSQKEKVINPVFDPRKPAHELKGNK. A Q motif motif is present at residues 138-167; it reads TNFAGVQLDTQLADHLNNKMNISAPTAIQS. Residues 172–366 form the Helicase ATP-binding domain; it reads ALLNTDDKDA…DSALKDALYL (195 aa). 185–192 is an ATP binding site; it reads AQTGSGKT. Positions 301–304 match the DEAD box motif; that stretch reads DEGD. Residues 404-580 enclose the Helicase C-terminal domain; sequence LLRSHVRSYK…EQPNGPSGLL (177 aa). Positions 662–690 are disordered; the sequence is GKISGANSSKPRKQGGSVDKGKSKSSKDI.

The protein belongs to the DEAD box helicase family. DDX31/DBP7 subfamily.

The protein localises to the nucleus. Its subcellular location is the nucleolus. The enzyme catalyses ATP + H2O = ADP + phosphate + H(+). Functionally, ATP-binding RNA helicase involved in the biogenesis of 60S ribosomal subunits and is required for the normal formation of 25S and 5.8S rRNAs. In Schizosaccharomyces pombe (strain 972 / ATCC 24843) (Fission yeast), this protein is ATP-dependent RNA helicase dbp7 (dbp7).